Reading from the N-terminus, the 171-residue chain is Regulatory protein RecX (171 aa).

This sequence belongs to the RecX family.

The protein localises to the cytoplasm. Functionally, modulates RecA activity. This Mycobacterium leprae (strain Br4923) protein is Regulatory protein RecX.